We begin with the raw amino-acid sequence, 358 residues long: Uroporphyrinogen decarboxylase (358 aa).

Substrate contacts are provided by residues 29–33 (RQAGR), Phe48, Asp79, Tyr155, Ser210, and His330.

The protein belongs to the uroporphyrinogen decarboxylase family. Homodimer.

It is found in the cytoplasm. It catalyses the reaction uroporphyrinogen III + 4 H(+) = coproporphyrinogen III + 4 CO2. It functions in the pathway porphyrin-containing compound metabolism; protoporphyrin-IX biosynthesis; coproporphyrinogen-III from 5-aminolevulinate: step 4/4. Functionally, catalyzes the decarboxylation of four acetate groups of uroporphyrinogen-III to yield coproporphyrinogen-III. This is Uroporphyrinogen decarboxylase from Bordetella bronchiseptica (strain ATCC BAA-588 / NCTC 13252 / RB50) (Alcaligenes bronchisepticus).